The primary structure comprises 207 residues: Cytidylate kinase (207 aa).

G7–S15 serves as a coordination point for ATP.

This sequence belongs to the cytidylate kinase family. Type 1 subfamily.

It is found in the cytoplasm. The enzyme catalyses CMP + ATP = CDP + ADP. The catalysed reaction is dCMP + ATP = dCDP + ADP. This is Cytidylate kinase from Deinococcus deserti (strain DSM 17065 / CIP 109153 / LMG 22923 / VCD115).